We begin with the raw amino-acid sequence, 95 residues long: MSVDIDTVKRVARLARIAVDEEDASRMTGELNAILGFVEQLNEVDVTGVEPMTSVIPTTMKMRVDEVTDGSKAEDIVANAPQTEEHFFLVPKVVE.

This sequence belongs to the GatC family. Heterotrimer of A, B and C subunits.

The enzyme catalyses L-glutamyl-tRNA(Gln) + L-glutamine + ATP + H2O = L-glutaminyl-tRNA(Gln) + L-glutamate + ADP + phosphate + H(+). It catalyses the reaction L-aspartyl-tRNA(Asn) + L-glutamine + ATP + H2O = L-asparaginyl-tRNA(Asn) + L-glutamate + ADP + phosphate + 2 H(+). Its function is as follows. Allows the formation of correctly charged Asn-tRNA(Asn) or Gln-tRNA(Gln) through the transamidation of misacylated Asp-tRNA(Asn) or Glu-tRNA(Gln) in organisms which lack either or both of asparaginyl-tRNA or glutaminyl-tRNA synthetases. The reaction takes place in the presence of glutamine and ATP through an activated phospho-Asp-tRNA(Asn) or phospho-Glu-tRNA(Gln). The chain is Aspartyl/glutamyl-tRNA(Asn/Gln) amidotransferase subunit C from Chelativorans sp. (strain BNC1).